The primary structure comprises 517 residues: MDIVGGQNLRQMWDDLAGVYGDKTALIFESCEGIVRQFSYASLNEEINRTANLFYSLGIRKGDRVALHLDNCPEFIFCWFGLAKIGAIMVPINARLLGEESAWILQNSQVSLLVTSAQFYPMYREIRQDNSTPLNHICLIGEQLPADDGVSHFTQLQSRQSTTLCYTPALSTDDTAEILFTSGTTSRPKGVVITHYNLRFAGYYSAWQIALRDDDVYMTVMPAFHIDCQCTAAMPAFSAGSTFVLLEKYSARAFWDQVRKYQATVTECIPMMIRTLMVQPAAPTDRQHHLREVMFYLNLSEQEKDDFTERFGVRLLTSYGMTETIVGIIGDRPGDKRRWPSIGRVGFSYEAEIRDDQNRPLPAGEIGEICIKGIPGKTIFKEYYMQPEATARALEPEGWLHTGDSGYQDEDGYFYFVDRRCNMIKRGGENVSCVELENIISAHPKIQDIVVVGIKDAIRDEAIKAFIVLNEGETLSEAEFFSFCENNMAKFKVPSFMEIRTDLPRNCSGKIIKKNLK.

Belongs to the ATP-dependent AMP-binding enzyme family.

The catalysed reaction is 4-(trimethylamino)butanoate + ATP + CoA = 4-(trimethylamino)butanoyl-CoA + AMP + diphosphate. It carries out the reaction crotonobetaine + ATP + CoA = crotonobetainyl-CoA + AMP + diphosphate. The enzyme catalyses (R)-carnitine + ATP + CoA = (R)-carnitinyl-CoA + AMP + diphosphate. It participates in amine and polyamine metabolism; carnitine metabolism. Catalyzes the transfer of CoA to carnitine, generating the initial carnitinyl-CoA needed for the CaiB reaction cycle. Also has activity toward crotonobetaine and gamma-butyrobetaine. In Salmonella agona (strain SL483), this protein is Crotonobetaine/carnitine--CoA ligase.